Consider the following 143-residue polypeptide: Transcriptional regulator SlyA (143 aa).

The HTH marR-type domain occupies 2 to 135 (ESTLGSDLAR…LSGLIDKLEK (134 aa)). The H-T-H motif DNA-binding region spans 49 to 72 (QIQLAKAIGIEQPSLVRTLDQLEE).

The protein belongs to the SlyA family. In terms of assembly, homodimer.

Functionally, transcription regulator that can specifically activate or repress expression of target genes. The protein is Transcriptional regulator SlyA of Yersinia pestis bv. Antiqua (strain Antiqua).